Reading from the N-terminus, the 457-residue chain is MDFVLTRLILLFLAATIIYSSEDESRLINDLFKSYNKVVRPVKAFKDKVVVTVGLQLIQLINVNEVNQIVTTNVRLKQQWEDVHLKWDPEDYGGIKKVRIPSSDIWRPDIVLYNNADGDFAIVQETKVLLDYTGKIIWLPPAIFKSYCEMIVTYFPFDLQNCSMKLGTWTYDGTLVVINPENDRPDLSNFMESGEWYMKDYRCWKHWVYYDCCPETPYLDITYHFLLQRLPLYFIVNVVIPCLLFSFLTGLVFYLPTDSGEKITLSVSVLLSLVVFLLVIVELIPSTSSAVPLIGKYMLFTMVFVIASIVITVIVINTHHRSPSTHIMPQWLKKIFIETIPRVMFFSTMKRPAQDQHKKKIFTEDIDISDISGKLGPTAVKYQSPILKNPDVKSAIEGAKYVAETMKSDQESTKASEEWKFVAMVLDHLLLAVFMIVCIIGTLAIFAGRLIELHMQG.

A signal peptide spans 1–20 (MDFVLTRLILLFLAATIIYS). Topologically, residues 21-230 (SEDESRLIND…ITYHFLLQRL (210 aa)) are extracellular. Disulfide bonds link C148-C162 and C212-C213. N161 carries an N-linked (GlcNAc...) asparagine glycan. The next 3 membrane-spanning stretches (helical) occupy residues 231–255 (PLYF…VFYL), 263–281 (ITLS…LVIV), and 297–316 (YMLF…VIVI). Residues 317–428 (NTHHRSPSTH…WKFVAMVLDH (112 aa)) are Cytoplasmic-facing. A helical membrane pass occupies residues 429–447 (LLLAVFMIVCIIGTLAIFA).

The protein belongs to the ligand-gated ion channel (TC 1.A.9) family. Acetylcholine receptor (TC 1.A.9.1) subfamily. Alpha-1/CHRNA1 sub-subfamily. In terms of assembly, one of the alpha chains that assemble within the acetylcholine receptor, a pentamer of two alpha chains, a beta, a delta, and a gamma or epsilon chains. As to expression, oocytes.

It is found in the postsynaptic cell membrane. It localises to the cell membrane. The enzyme catalyses K(+)(in) = K(+)(out). It carries out the reaction Na(+)(in) = Na(+)(out). Its function is as follows. Upon acetylcholine binding, the AChR responds by an extensive change in conformation that affects all subunits and leads to opening of an ion-conducting channel across the plasma membrane. The protein is Acetylcholine receptor subunit alpha-1-A (chrna1-a) of Xenopus laevis (African clawed frog).